The sequence spans 99 residues: Nucleoid-associated protein EbfC (99 aa).

Belongs to the YbaB/EbfC family. Homodimer.

The protein resides in the cytoplasm. It localises to the nucleoid. Functionally, binds to DNA and alters its conformation. May be involved in regulation of gene expression, nucleoid organization and DNA protection. This chain is Nucleoid-associated protein EbfC, found in Borrelia turicatae (strain 91E135).